The sequence spans 249 residues: tRNA pseudouridine synthase A (249 aa).

Aspartate 53 serves as the catalytic Nucleophile. Tyrosine 111 serves as a coordination point for substrate.

The protein belongs to the tRNA pseudouridine synthase TruA family. As to quaternary structure, homodimer.

The enzyme catalyses uridine(38/39/40) in tRNA = pseudouridine(38/39/40) in tRNA. Functionally, formation of pseudouridine at positions 38, 39 and 40 in the anticodon stem and loop of transfer RNAs. The protein is tRNA pseudouridine synthase A of Streptococcus pyogenes serotype M3 (strain ATCC BAA-595 / MGAS315).